The sequence spans 549 residues: Chaperonin GroEL (549 aa).

ATP contacts are provided by residues 30–33 (TLGP), Lys-51, 87–91 (DGTTT), Gly-415, 479–481 (NAA), and Asp-495.

Belongs to the chaperonin (HSP60) family. Forms a cylinder of 14 subunits composed of two heptameric rings stacked back-to-back. Interacts with the co-chaperonin GroES.

It localises to the cytoplasm. It carries out the reaction ATP + H2O + a folded polypeptide = ADP + phosphate + an unfolded polypeptide.. Its function is as follows. Together with its co-chaperonin GroES, plays an essential role in assisting protein folding. The GroEL-GroES system forms a nano-cage that allows encapsulation of the non-native substrate proteins and provides a physical environment optimized to promote and accelerate protein folding. This chain is Chaperonin GroEL, found in Stenotrophomonas maltophilia (strain K279a).